A 345-amino-acid polypeptide reads, in one-letter code: Dihydroorotase (345 aa).

Positions 13 and 15 each coordinate Zn(2+). Substrate-binding positions include 15-17 (HFR) and asparagine 41. The Zn(2+) site is built by lysine 98, histidine 135, and histidine 173. An N6-carboxylysine modification is found at lysine 98. Histidine 135 serves as a coordination point for substrate. Substrate is bound at residue leucine 218. Aspartate 246 is a Zn(2+) binding site. Aspartate 246 is an active-site residue. The substrate site is built by histidine 250 and alanine 262.

Belongs to the metallo-dependent hydrolases superfamily. DHOase family. Class II DHOase subfamily. In terms of assembly, homodimer. Zn(2+) serves as cofactor.

It carries out the reaction (S)-dihydroorotate + H2O = N-carbamoyl-L-aspartate + H(+). It participates in pyrimidine metabolism; UMP biosynthesis via de novo pathway; (S)-dihydroorotate from bicarbonate: step 3/3. In terms of biological role, catalyzes the reversible cyclization of carbamoyl aspartate to dihydroorotate. The polypeptide is Dihydroorotase (Shewanella piezotolerans (strain WP3 / JCM 13877)).